The primary structure comprises 351 residues: uncharacterized protein (351 aa).

Mn(2+) contacts are provided by Asp-215, Asp-226, His-290, Glu-319, and Glu-333.

The protein belongs to the peptidase M24B family. Requires Mn(2+) as cofactor.

This is an uncharacterized protein from Staphylococcus aureus (strain MSSA476).